We begin with the raw amino-acid sequence, 573 residues long: Proline--tRNA ligase (573 aa).

It belongs to the class-II aminoacyl-tRNA synthetase family. ProS type 1 subfamily. Homodimer.

The protein resides in the cytoplasm. It carries out the reaction tRNA(Pro) + L-proline + ATP = L-prolyl-tRNA(Pro) + AMP + diphosphate. Catalyzes the attachment of proline to tRNA(Pro) in a two-step reaction: proline is first activated by ATP to form Pro-AMP and then transferred to the acceptor end of tRNA(Pro). As ProRS can inadvertently accommodate and process non-cognate amino acids such as alanine and cysteine, to avoid such errors it has two additional distinct editing activities against alanine. One activity is designated as 'pretransfer' editing and involves the tRNA(Pro)-independent hydrolysis of activated Ala-AMP. The other activity is designated 'posttransfer' editing and involves deacylation of mischarged Ala-tRNA(Pro). The misacylated Cys-tRNA(Pro) is not edited by ProRS. This Geobacter sp. (strain M21) protein is Proline--tRNA ligase.